Reading from the N-terminus, the 186-residue chain is uncharacterized protein (186 aa).

The N-terminal stretch at 1 to 21 is a signal peptide; it reads MKFFLGSALFLILTFINLVRA. Over 22 to 142 the chain is Extracellular; that stretch reads EFEFITPAED…AFSVNPIDKK (121 aa). Asn62, Asn75, Asn93, and Asn104 each carry an N-linked (GlcNAc...) asparagine glycan. Residues 143-163 form a helical membrane-spanning segment; sequence LAIGLSVGLSCCILIVLFLHF. Over 164–186 the chain is Cytoplasmic; it reads ATRRERRILKNEKELEMSSYRKH.

Its subcellular location is the membrane. This is an uncharacterized protein from Schizosaccharomyces pombe (strain 972 / ATCC 24843) (Fission yeast).